The chain runs to 99 residues: PE family immunomodulator PE35 (99 aa).

A PE domain is found at methionine 1–aspartate 90.

This sequence belongs to the mycobacterial PE family. As to quaternary structure, interacts with PPE68. PE35/PPE68 complex interacts with human TLR2.

The protein resides in the secreted. It is found in the cell surface. In terms of biological role, plays a major role in RD1-associated pathogenesis, and may contribute to the establishment and maintenance of M.tuberculosis infection. Together with PPE68, stimulates the secretion of IL-10 and MCP-1 from human macrophages, via the interaction with human Toll-like receptor 2 (TLR2). This is PE family immunomodulator PE35 (PE35) from Mycobacterium tuberculosis (strain ATCC 25618 / H37Rv).